We begin with the raw amino-acid sequence, 183 residues long: Glutathione-regulated potassium-efflux system ancillary protein KefG (183 aa).

Belongs to the NAD(P)H dehydrogenase (quinone) family. KefG subfamily. Interacts with KefB.

The protein localises to the cell inner membrane. The enzyme catalyses a quinone + NADH + H(+) = a quinol + NAD(+). It carries out the reaction a quinone + NADPH + H(+) = a quinol + NADP(+). Its function is as follows. Regulatory subunit of a potassium efflux system that confers protection against electrophiles. Required for full activity of KefB. This is Glutathione-regulated potassium-efflux system ancillary protein KefG from Yersinia pestis bv. Antiqua (strain Angola).